The following is a 76-amino-acid chain: NADH dehydrogenase [ubiquinone] 1 subunit C1, mitochondrial (76 aa).

The transit peptide at 1–27 (MAPSALLRPFWKLLAPARFPSVSSSRS) directs the protein to the mitochondrion. The helical transmembrane segment at 41–59 (WLKVGLTLGTSVFLWIYLI) threads the bilayer.

The protein belongs to the complex I NDUFC1 subunit family. Complex I is composed of 45 different subunits.

It localises to the mitochondrion inner membrane. Accessory subunit of the mitochondrial membrane respiratory chain NADH dehydrogenase (Complex I), that is believed not to be involved in catalysis. Complex I functions in the transfer of electrons from NADH to the respiratory chain. The immediate electron acceptor for the enzyme is believed to be ubiquinone. This is NADH dehydrogenase [ubiquinone] 1 subunit C1, mitochondrial (NDUFC1) from Bos taurus (Bovine).